The following is a 455-amino-acid chain: Exodeoxyribonuclease 7 large subunit (455 aa).

The protein belongs to the XseA family. In terms of assembly, heterooligomer composed of large and small subunits.

It is found in the cytoplasm. It carries out the reaction Exonucleolytic cleavage in either 5'- to 3'- or 3'- to 5'-direction to yield nucleoside 5'-phosphates.. In terms of biological role, bidirectionally degrades single-stranded DNA into large acid-insoluble oligonucleotides, which are then degraded further into small acid-soluble oligonucleotides. The protein is Exodeoxyribonuclease 7 large subunit of Escherichia fergusonii (strain ATCC 35469 / DSM 13698 / CCUG 18766 / IAM 14443 / JCM 21226 / LMG 7866 / NBRC 102419 / NCTC 12128 / CDC 0568-73).